A 178-amino-acid polypeptide reads, in one-letter code: uncharacterized protein (178 aa).

Residues 152–178 (KKLKGAEPKEHQAPNFEPPTEIFPESN) are disordered.

Belongs to the EUO family.

This is an uncharacterized protein from Chlamydia pneumoniae (Chlamydophila pneumoniae).